Consider the following 83-residue polypeptide: Kunitz-type serine protease inhibitor vestiginin-3 (83 aa).

A signal peptide spans 1-24; sequence MSSGGLLLLLGLLTLWAELTPVSS. Residues 31 to 81 form the BPTI/Kunitz inhibitor domain; sequence CKLPKEPGPCRSYLLYFYYNSVEHKCQTFHYGGCEGNENRFHTIEECKSTC. Intrachain disulfides connect Cys-31/Cys-81, Cys-40/Cys-64, and Cys-56/Cys-77.

This sequence belongs to the venom Kunitz-type family. Expressed by the venom gland.

Its subcellular location is the secreted. Functionally, serine protease inhibitor. This is Kunitz-type serine protease inhibitor vestiginin-3 from Demansia vestigiata (Lesser black whip snake).